Reading from the N-terminus, the 796-residue chain is Pathogenesis-related homeodomain protein (796 aa).

2 disordered regions span residues 34–57 and 80–99; these read KKGK…EELC and VKKT…KVEV. The span at 81 to 90 shows a compositional bias: basic residues; the sequence is KKTRKRKSKR. Residues 190–247 form a PHD-type zinc finger; the sequence is HIFCAECNSREAFPDNDIILCDGTCNRAFHQKCLDPPLETESIPPGDQGWFCKFCDCK. Disordered stretches follow at residues 282 to 347, 393 to 422, and 511 to 736; these read SEAT…STGS, LQEQ…STLV, and NRKT…TEEE. The segment covering 292–303 has biased composition (acidic residues); it reads WPSDDSKDDDYD. The homeobox DNA-binding region spans 452–511; it reads GGRRRMFRLPRNAVEKLRQVFAETELPSKAVRDRLAKELSLDPEKVNKWFKNTRYMALRN. 2 stretches are compositionally biased toward polar residues: residues 538–547 and 560–569; these read ENNTETNEVQ and ATNQNILSPC. Over residues 570–580 the composition is skewed to low complexity; that stretch reads NNNQEEFQQEN. Residues 581 to 600 show a composition bias toward polar residues; that stretch reads VSFPSPTDESQQYLEQNDSS. 4 repeat units span residues 605 to 631, 632 to 658, 659 to 685, and 686 to 712. The tract at residues 605-735 is 5 X 27 AA tandem repeats; it reads PHEKQSSEIS…KETGRKMTEE (131 aa). 3 stretches are compositionally biased toward basic and acidic residues: residues 624 to 636, 645 to 690, and 700 to 733; these read TESK…HEEL, AAEE…HDEL, and VEEK…RKMT. The stretch at 713–735 is one 5; truncated repeat; it reads SHEELSNEMSLEEKETGRKMTEE. Residues 738–759 are leucine-zipper; sequence LEAVMEMLCRTENKLLDVTQRL.

Belongs to the PHD-associated homeobox family.

Its subcellular location is the nucleus. Its function is as follows. Specifically binds to the fungal elicitor-responsive DNA element, 5'-CTAATTGTTTA-3', of the gene PR2 promoter. The chain is Pathogenesis-related homeodomain protein (PRH) from Arabidopsis thaliana (Mouse-ear cress).